A 488-amino-acid chain; its full sequence is 3-octaprenyl-4-hydroxybenzoate carboxy-lyase (488 aa).

Asn-172 contacts Mn(2+). Residues 175 to 177 (IYR), 189 to 191 (RWL), and 194 to 195 (RG) contribute to the prenylated FMN site. Residue Glu-238 coordinates Mn(2+). The Proton donor role is filled by Asp-287.

This sequence belongs to the UbiD family. In terms of assembly, homohexamer. Prenylated FMN serves as cofactor. The cofactor is Mn(2+).

Its subcellular location is the cell membrane. It catalyses the reaction a 4-hydroxy-3-(all-trans-polyprenyl)benzoate + H(+) = a 2-(all-trans-polyprenyl)phenol + CO2. Its pathway is cofactor biosynthesis; ubiquinone biosynthesis. Its function is as follows. Catalyzes the decarboxylation of 3-octaprenyl-4-hydroxy benzoate to 2-octaprenylphenol, an intermediate step in ubiquinone biosynthesis. The protein is 3-octaprenyl-4-hydroxybenzoate carboxy-lyase of Hahella chejuensis (strain KCTC 2396).